We begin with the raw amino-acid sequence, 191 residues long: Cell division protein SepF (191 aa).

Positions T150–T164 are enriched in low complexity. The tract at residues T150–S191 is disordered. Residues E165–P178 show a composition bias toward polar residues.

This sequence belongs to the SepF family. Homodimer. Interacts with FtsZ.

The protein resides in the cytoplasm. In terms of biological role, cell division protein that is part of the divisome complex and is recruited early to the Z-ring. Probably stimulates Z-ring formation, perhaps through the cross-linking of FtsZ protofilaments. Its function overlaps with FtsA. This chain is Cell division protein SepF, found in Prochlorococcus marinus (strain AS9601).